Consider the following 264-residue polypeptide: Small ribosomal subunit protein uS2 (264 aa).

The tract at residues 228 to 264 is disordered; it reads VDTSATVDEEEAEVAEETESMESAEDLDADLIEEEAE. A compositionally biased stretch (acidic residues) spans 234–264; that stretch reads VDEEEAEVAEETESMESAEDLDADLIEEEAE.

Belongs to the universal ribosomal protein uS2 family.

The sequence is that of Small ribosomal subunit protein uS2 from Symbiobacterium thermophilum (strain DSM 24528 / JCM 14929 / IAM 14863 / T).